The following is a 211-amino-acid chain: Intermembrane phospholipid transport system binding protein MlaC (211 aa).

An N-terminal signal peptide occupies residues 1-21; it reads MFKRLMMVALLVIAPLSAATA.

The protein belongs to the MlaC/ttg2D family. In terms of assembly, interacts with the MlaA-OmpF outer membrane complex and with the inner membrane ABC transporter complex MlaFEDB, via direct interaction with MlaD.

It is found in the periplasm. Its function is as follows. Involved in a phospholipid transport pathway that maintains lipid asymmetry in the outer membrane by retrograde trafficking of phospholipids from the outer membrane to the inner membrane. May transfer phospholipid across the periplasmic space and deliver it to the MlaFEDB complex at the inner membrane. This chain is Intermembrane phospholipid transport system binding protein MlaC, found in Escherichia coli (strain K12).